A 175-amino-acid chain; its full sequence is Large ribosomal subunit protein uL10 (175 aa).

Belongs to the universal ribosomal protein uL10 family. Part of the ribosomal stalk of the 50S ribosomal subunit. The N-terminus interacts with L11 and the large rRNA to form the base of the stalk. The C-terminus forms an elongated spine to which L12 dimers bind in a sequential fashion forming a multimeric L10(L12)X complex.

Forms part of the ribosomal stalk, playing a central role in the interaction of the ribosome with GTP-bound translation factors. This chain is Large ribosomal subunit protein uL10, found in Prochlorococcus marinus (strain AS9601).